The primary structure comprises 247 residues: Probable transcriptional regulatory protein BT_0627 (247 aa).

The protein belongs to the TACO1 family.

The protein localises to the cytoplasm. The sequence is that of Probable transcriptional regulatory protein BT_0627 from Bacteroides thetaiotaomicron (strain ATCC 29148 / DSM 2079 / JCM 5827 / CCUG 10774 / NCTC 10582 / VPI-5482 / E50).